Here is a 121-residue protein sequence, read N- to C-terminus: Met-lysine-1b (121 aa).

The first 22 residues, 1 to 22 (MKSFVFALALIVAFACISESKS), serve as a signal peptide directing secretion. The propeptide occupies 23–69 (DHTGYEEEENLEDSELTDLVAAALLEELAEASEMDDLSYTEEAGGER). At M120 the chain carries Methionine amide.

As to expression, expressed by the venom gland.

The protein localises to the secreted. Functionally, shows no antimicrobial activity against Gram-positive bacterium B.subtilis B-501 or Gram-negative bacterium E.coli DH5-alpha at concentrations up to 20 ug/ml. Shows no toxicity towards insect (S.carnaria) larvae. The polypeptide is Met-lysine-1b (Lachesana tarabaevi (Spider)).